The sequence spans 436 residues: GTPase Der (436 aa).

EngA-type G domains lie at 4–167 (PTIA…PNEE) and 175–351 (IKFS…QSQN). Residues 10-17 (GRPNVGKS), 57-61 (DTGGI), 119-122 (NKVD), 181-188 (GRPNVGKS), 229-233 (DTAGM), and 294-297 (NKWD) each bind GTP. Residues 352–436 (TRIPSAVLND…PIHLIARKRK (85 aa)) form the KH-like domain.

The protein belongs to the TRAFAC class TrmE-Era-EngA-EngB-Septin-like GTPase superfamily. EngA (Der) GTPase family. In terms of assembly, associates with the 50S ribosomal subunit.

Its function is as follows. GTPase that plays an essential role in the late steps of ribosome biogenesis. The sequence is that of GTPase Der from Streptococcus sanguinis (strain SK36).